The chain runs to 8545 residues: Nuclear anchorage protein 1 (8545 aa).

Residues 1-325 (MSSSPPARPC…VITYVSQFVR (325 aa)) form an actin-binding region. Residues 1-8494 (MSSSPPARPC…QRSRWRRVLR (8494 aa)) are Cytoplasmic-facing. The 108-residue stretch at 23–130 (KAQKNTFTRW…LIWQIILHFQ (108 aa)) folds into the Calponin-homology (CH) 1 domain. The tract at residues 148 to 197 (TEEPTSSAQPEVVVTAPSPTPSSKKSHSKVSSLSGSKTSLASGEKAPSSP) is disordered. The segment covering 159 to 190 (VVVTAPSPTPSSKKSHSKVSSLSGSKTSLASG) has biased composition (low complexity). The region spanning 222–328 (QSVEQVFLRW…YVSQFVRMFG (107 aa)) is the Calponin-homology (CH) 2 domain. 19 coiled-coil regions span residues 754–774 (NIRD…NHSR), 1072–1101 (SFFQ…LMVH), 1215–1236 (ADIL…EIQA), 1324–1384 (DTKK…QFED), 1574–1629 (RSIE…DLVK), 1725–1754 (ENRN…YEDA), 1950–1981 (PAII…NYNQ), 2103–2580 (DNIE…KKSD), 2682–2712 (SVKE…KIAK), 2852–2949 (IMQE…NIGK), 3002–3119 (DQIV…KTVV), 3178–3295 (DDEK…DEFK), 3346–3417 (QLQH…PEND), 3482–3552 (DELI…EKSL), 3587–3703 (KAEE…ELLD), 3781–3839 (ALKA…KEQL), 3902–4022 (AAHD…KTVV), 4114–4198 (LDVA…DEFK), and 4249–4320 (QLQH…PEND). Over residues 3010–3019 (EAEDVTAKES) the composition is skewed to basic and acidic residues. The tract at residues 3010–3033 (EAEDVTAKESAKKKKKDKKKSPQE) is disordered. Tandem repeats lie at residues 3241-4143 (QVAK…KIDP), 4144-5097 (QVAK…KIDP), 5098-6000 (QVAK…KIDP), 6001-6903 (QVAK…KIDP), 6904-7806 (QVAK…KIDP), and 7807-8199 (QVAK…EERA). Residues 3241–8199 (QVAKDIKDSK…TLIPDLEERA (4959 aa)) are 6 X tandem repeat. The segment covering 3913–3922 (EAEDVTAKES) has biased composition (basic and acidic residues). The interval 3913–3936 (EAEDVTAKESAKKKKKDKKKSPQE) is disordered. Basic and acidic residues predominate over residues 4372 to 4393 (ITREDGGDDNKSPDELIDDRGR). A disordered region spans residues 4372–4395 (ITREDGGDDNKSPDELIDDRGRST). Coiled-coil stretches lie at residues 4436-4506 (DELI…EKSL), 4541-4657 (KAEE…ELLD), 4735-4793 (ALKA…KEQL), 4856-4976 (AAHD…KTVV), 5035-5152 (DDEK…DEFK), 5203-5274 (QLQH…PEND), 5339-5409 (DELI…EKSL), 5444-5560 (KAEE…ELLD), 5638-5696 (ALKA…KEQL), 5759-5879 (AAHD…KTVV), 5938-6055 (DDEK…DEFK), 6106-6177 (QLQH…PEND), 6242-6312 (DELI…EKSL), 6347-6463 (KAEE…ELLD), 6541-6599 (ALKA…KEQL), 6662-6782 (AAHD…KTVV), 6841-6958 (DDEK…DEFK), 7009-7080 (QLQH…PEND), 7145-7215 (DELI…EKSL), 7250-7366 (KAEE…ELLD), 7444-7502 (ALKA…KEQL), 7565-7685 (AAHD…KTVV), 7744-7861 (DDEK…DEFK), 7912-7983 (QLQH…PEND), 8048-8118 (DELI…EKSL), 8153-8204 (KAEE…IWER), 8273-8329 (VAED…DINN), and 8370-8390 (STSI…KEIE). The segment covering 4867–4876 (EAEDVTAKES) has biased composition (basic and acidic residues). A disordered region spans residues 4867–4890 (EAEDVTAKESAKKKKKDKKKSPQE). The segment covering 5770–5779 (EAEDVTAKES) has biased composition (basic and acidic residues). Positions 5770 to 5793 (EAEDVTAKESAKKKKKDKKKSPQE) are disordered. Residues 6673–6682 (EAEDVTAKES) show a composition bias toward basic and acidic residues. Residues 6673-6696 (EAEDVTAKESAKKKKKDKKKSPQE) form a disordered region. A compositionally biased stretch (basic and acidic residues) spans 7576–7585 (EAEDVTAKES). Residues 7576-7599 (EAEDVTAKESAKKKKKDKKKSPQE) are disordered. 2 disordered regions span residues 8391-8418 (PRLQ…KPYD) and 8449-8480 (SDSE…LSEE). A compositionally biased stretch (acidic residues) spans 8401 to 8411 (DNEDDEDEEKG). The segment covering 8451–8464 (SESRSEFDSLDSRS) has biased composition (basic and acidic residues). Residues 8486-8545 (RSRWRRVLRTALPLQALLVLLMGAACLVPHCDDEYCCQLLNNFAKSFDPSLEFVNGPPPF) form the KASH domain. Residues 8495 to 8513 (TALPLQALLVLLMGAACLV) form a helical; Anchor for type IV membrane protein membrane-spanning segment. Residues 8514 to 8545 (PHCDDEYCCQLLNNFAKSFDPSLEFVNGPPPF) are Perinuclear space-facing.

The protein belongs to the nesprin family. In terms of assembly, interacts with F-actin via its N-terminal domain. Most likely interacts with unc-84; the interaction is probably required to recruit anc-1 to the nuclear envelope. Ubiquitously expressed in all postembryonic cells.

It localises to the nucleus outer membrane. It is found in the cytoplasm. The protein resides in the cytoskeleton. In terms of biological role, plays a central role in nuclear and mitochondrial anchoring. Probably connects nuclei to the cytoskeleton by interacting with unc-84 at the nuclear envelope and with F-actin in the cytoplasm, creating a bridge across the nuclear envelope between the cytoskeleton and the nucleus. Has a role in positioning of the cell body of the PVQ lumbar interneuron. In Caenorhabditis elegans, this protein is Nuclear anchorage protein 1.